Consider the following 165-residue polypeptide: UPF0114 protein in repA1-repA2 intergenic region (165 aa).

The next 3 helical transmembrane spans lie at 15–35, 53–73, and 136–156; these read LMFP…VKFF, LVLI…LVMV, and IMWC…MAYI.

The protein belongs to the UPF0114 family.

The protein localises to the cell membrane. This Buchnera aphidicola subsp. Thelaxes suberi protein is UPF0114 protein in repA1-repA2 intergenic region.